A 281-amino-acid polypeptide reads, in one-letter code: UPF0750 membrane protein YvjA (281 aa).

A run of 5 helical transmembrane segments spans residues 14–34 (YVYI…FLLP), 56–76 (AAYV…ILLG), 77–97 (GKFG…VFLT), 108–128 (LLAA…VYLG), and 149–169 (SLGK…MIVF).

The protein belongs to the UPF0750 family.

The protein localises to the cell membrane. The protein is UPF0750 membrane protein YvjA (yvjA) of Bacillus subtilis (strain 168).